Consider the following 146-residue polypeptide: Small ribosomal subunit protein bS16 (146 aa).

The interval 119 to 146 (GSENKGGKSKKAEEKSAEKTAEKSEGEA) is disordered. Over residues 128-146 (KKAEEKSAEKTAEKSEGEA) the composition is skewed to basic and acidic residues.

The protein belongs to the bacterial ribosomal protein bS16 family.

The chain is Small ribosomal subunit protein bS16 from Thermobifida fusca (strain YX).